The sequence spans 95 residues: uncharacterized protein (95 aa).

The next 3 helical transmembrane spans lie at 3–23, 35–55, and 63–83; these read YTVL…GFSF, ILFL…MMLT, and MLGV…VMII.

It localises to the cell membrane. This is an uncharacterized protein from Mycoplasma pneumoniae (strain ATCC 29342 / M129 / Subtype 1) (Mycoplasmoides pneumoniae).